The following is a 608-amino-acid chain: Elongation factor 4 (608 aa).

Positions 11–193 constitute a tr-type G domain; it reads KKIRNFSIIA…QIVEKVPEPS (183 aa). GTP-binding positions include 23–28 and 140–143; these read DHGKST and NKID.

This sequence belongs to the TRAFAC class translation factor GTPase superfamily. Classic translation factor GTPase family. LepA subfamily.

Its subcellular location is the cell membrane. The catalysed reaction is GTP + H2O = GDP + phosphate + H(+). Functionally, required for accurate and efficient protein synthesis under certain stress conditions. May act as a fidelity factor of the translation reaction, by catalyzing a one-codon backward translocation of tRNAs on improperly translocated ribosomes. Back-translocation proceeds from a post-translocation (POST) complex to a pre-translocation (PRE) complex, thus giving elongation factor G a second chance to translocate the tRNAs correctly. Binds to ribosomes in a GTP-dependent manner. In Listeria monocytogenes serotype 4b (strain CLIP80459), this protein is Elongation factor 4.